We begin with the raw amino-acid sequence, 388 residues long: Chorismate synthase (388 aa).

2 residues coordinate NADP(+): Arg39 and Arg45. Residues Arg132–Ser134, Asn251–Ala252, Gly296, Lys311–Thr315, and Arg337 contribute to the FMN site.

Belongs to the chorismate synthase family. As to quaternary structure, homotetramer. Requires FMNH2 as cofactor.

It catalyses the reaction 5-O-(1-carboxyvinyl)-3-phosphoshikimate = chorismate + phosphate. It functions in the pathway metabolic intermediate biosynthesis; chorismate biosynthesis; chorismate from D-erythrose 4-phosphate and phosphoenolpyruvate: step 7/7. Functionally, catalyzes the anti-1,4-elimination of the C-3 phosphate and the C-6 proR hydrogen from 5-enolpyruvylshikimate-3-phosphate (EPSP) to yield chorismate, which is the branch point compound that serves as the starting substrate for the three terminal pathways of aromatic amino acid biosynthesis. This reaction introduces a second double bond into the aromatic ring system. The sequence is that of Chorismate synthase from Staphylococcus haemolyticus (strain JCSC1435).